A 468-amino-acid polypeptide reads, in one-letter code: SVGFKAGVKEYKLTYYTPEYQTKDTDILAAFRVTPQPGVPPEEAGAAVAAESSTGTWTTVWTDGLTSLDRYKGRCYRIERVVGEKDQYIAYVAYPLDLFEEGSVTNMFTSIVGNVFGFKALRALRLEDLRIPPAYVKTFQGPPHGIQVERDKLNKYGRPLLGCTIKPKLGLSAKNYGRAVYECLRGGLDFTKDDENVNSQPFMRWRDRFLFCAEALYKAQAETGEIKGHYLNATAGTCEEMIKRAVFARELGVPIVMHDYLTGGFTANTSLAHYCRDNGLLLHIHRAMHAVIDRQKNHGIHFRVLAKALRMSGGDHIHSGTVVGKLEGERDITLGFVDLLRDDFVEQDRSRGIYFTQDWVSLPGVLPVASGGIHVWHMPALTEIFGDDSVLQFGGGTLGHPWGNAPGAVANRVALEACVQARNEGRDLAQEGNAIIREACKWSPELAAACEVWKEIVFNFAAVDVLDK.

Lys5 carries the post-translational modification N6,N6,N6-trimethyllysine. Residues Asn114 and Thr164 each coordinate substrate. The Proton acceptor role is filled by Lys166. Lys168 is a substrate binding site. The Mg(2+) site is built by Lys192, Asp194, and Glu195. The residue at position 192 (Lys192) is an N6-carboxylysine. Catalysis depends on His285, which acts as the Proton acceptor. Substrate is bound by residues Arg286, His318, and Ser370.

This sequence belongs to the RuBisCO large chain family. Type I subfamily. In terms of assembly, heterohexadecamer of 8 large chains and 8 small chains; disulfide-linked. The disulfide link is formed within the large subunit homodimers. It depends on Mg(2+) as a cofactor. Post-translationally, the disulfide bond which can form in the large chain dimeric partners within the hexadecamer appears to be associated with oxidative stress and protein turnover.

The protein localises to the plastid. It localises to the chloroplast. The catalysed reaction is 2 (2R)-3-phosphoglycerate + 2 H(+) = D-ribulose 1,5-bisphosphate + CO2 + H2O. It catalyses the reaction D-ribulose 1,5-bisphosphate + O2 = 2-phosphoglycolate + (2R)-3-phosphoglycerate + 2 H(+). RuBisCO catalyzes two reactions: the carboxylation of D-ribulose 1,5-bisphosphate, the primary event in carbon dioxide fixation, as well as the oxidative fragmentation of the pentose substrate in the photorespiration process. Both reactions occur simultaneously and in competition at the same active site. This chain is Ribulose bisphosphate carboxylase large chain, found in Anthocercis viscosa (Sticky tailflower).